Consider the following 755-residue polypeptide: Atypical kinase coq-8, mitochondrial (755 aa).

The tract at residues 57 to 78 (QDVDPLKEPNKTNAPLLSPTLP) is disordered. Polar residues predominate over residues 67–78 (KTNAPLLSPTLP). ATP contacts are provided by residues 435 to 443 (FACASIGQV) and K457. The active-site Proton acceptor is the D587.

The protein belongs to the protein kinase superfamily. ADCK protein kinase family.

It localises to the mitochondrion. It participates in cofactor biosynthesis; ubiquinone biosynthesis. Atypical kinase involved in the biosynthesis of coenzyme Q, also named ubiquinone, an essential lipid-soluble electron transporter for aerobic cellular respiration. Its substrate specificity is still unclear: may act as a protein kinase that mediates phosphorylation of coq-3. According to other reports, acts as a small molecule kinase, possibly a lipid kinase that phosphorylates a prenyl lipid in the ubiquinone biosynthesis pathway, as suggested by its ability to bind coenzyme Q lipid intermediates. The protein is Atypical kinase coq-8, mitochondrial (coq-8) of Caenorhabditis elegans.